Consider the following 598-residue polypeptide: Thiamine transporter (598 aa).

Topologically, residues 1–41 (MSFGSKVSRALRFLEIPVKDRASVSFLKNPDLQPIKSANQT) are cytoplasmic. The chain crosses the membrane as a helical span at residues 42–62 (WGFWSNFAYWGVMSFSVGTWM). Over 63–73 (SASSALGVGLS) the chain is Extracellular. Residues 74 to 94 (YPETIGTFIVGDVLTIIFTLA) form a helical membrane-spanning segment. Topologically, residues 95-111 (NSCPGYDWKVGFTLAQR) are cytoplasmic. A helical transmembrane segment spans residues 112–132 (FVFGIYGSAFGIIIRILMSIV). The Extracellular segment spans residues 133 to 173 (NYGSNAWVGGLCINMILDSWSHHYLHLPNTLSSKVAMTTKE). Residues 174–194 (LIGFIIFHVLTAFCYLMKPYH) form a helical membrane-spanning segment. The Cytoplasmic segment spans residues 195–197 (MNY). The chain crosses the membrane as a helical span at residues 198–218 (ILIWSCVATFFSMLGMVIYLA). Residues 219 to 240 (KQAHGVGELFTSTKSTATGSTK) are Extracellular-facing. A helical membrane pass occupies residues 241 to 261 (AWAWVYMISYWFGSVSPGSTN). Residues 262–274 (QSDYSRFGSSNWA) lie on the Cytoplasmic side of the membrane. A helical membrane pass occupies residues 275–295 (IWAGTICALLIPTTLIPVFGV). Over 296–332 (IGASTCDKLYGEQYWMPMDIFNHWLTTNYSAGARAGA) the chain is Extracellular. The chain crosses the membrane as a helical span at residues 333-353 (FFCGLSFVLSQMSYTISNCGF). Residues 354 to 371 (ASGMDLAGLLPKYVDIKR) lie on the Cytoplasmic side of the membrane. A helical membrane pass occupies residues 372-392 (GALFAACVSWACLPWNFYNSS). Topologically, residues 393–394 (ST) are extracellular. The helical transmembrane segment at 395-415 (FLTVMSSFGVVMTPIISVMIC) threads the bilayer. At 416–446 (DNFLIRKRQYSITNAFILKGEYYFTKGVNWR) the chain is on the cytoplasmic side. Residues 447-467 (AIVAWVCGMTPGLPGIAWEVN) traverse the membrane as a helical segment. The Extracellular portion of the chain corresponds to 468–483 (NDYFHNTGIVNFFYGD). A helical transmembrane segment spans residues 484–504 (SFFSFLISFFVYWGLCLLFPF). At 505–598 (KITVKHDDKD…QSSTASEKAA (94 aa)) the chain is on the cytoplasmic side. Ser560 is subject to Phosphoserine. Residues 574 to 598 (NTNEFEIVHHKNNEKQSSTASEKAA) form a disordered region. Over residues 588 to 598 (KQSSTASEKAA) the composition is skewed to polar residues.

Belongs to the purine-cytosine permease (2.A.39) family.

It localises to the membrane. Functionally, responsible for intake of thiamine. This chain is Thiamine transporter (THI7), found in Saccharomyces cerevisiae (strain ATCC 204508 / S288c) (Baker's yeast).